The following is a 400-amino-acid chain: Phosphoglycerate kinase (400 aa).

Substrate-binding positions include 23–25 (DLN), Arg-38, 61–64 (HFGR), Arg-120, and Arg-153. ATP-binding positions include Lys-203, Glu-325, and 355 to 358 (GGDT).

It belongs to the phosphoglycerate kinase family. Monomer.

Its subcellular location is the cytoplasm. It catalyses the reaction (2R)-3-phosphoglycerate + ATP = (2R)-3-phospho-glyceroyl phosphate + ADP. It participates in carbohydrate degradation; glycolysis; pyruvate from D-glyceraldehyde 3-phosphate: step 2/5. The protein is Phosphoglycerate kinase of Agrobacterium fabrum (strain C58 / ATCC 33970) (Agrobacterium tumefaciens (strain C58)).